The primary structure comprises 426 residues: Histone deacetylase 9 (426 aa).

Residues 6-318 are histone deacetylase; it reads KISYFYDGDV…WTVETGILLD (313 aa). H137 (proton donor/acceptor) is an active-site residue. Zn(2+)-binding residues include D172, H174, and D261. The segment at 383 to 426 is disordered; that stretch reads PDFYIPDFDEDEQNPDVRADQRSRDKQIQRDDEYFDGDNDNDAS. Residues 397-414 show a composition bias toward basic and acidic residues; sequence PDVRADQRSRDKQIQRDD. Residues 415-426 are compositionally biased toward acidic residues; the sequence is EYFDGDNDNDAS.

It belongs to the histone deacetylase family. HD type 1 subfamily. As to quaternary structure, interacts with AHL22. Binds to farnesylated ASG2 in the cytosol. Zn(2+) serves as cofactor.

It localises to the nucleus. The protein localises to the cytoplasm. Its subcellular location is the cytosol. The catalysed reaction is N(6)-acetyl-L-lysyl-[histone] + H2O = L-lysyl-[histone] + acetate. In terms of biological role, responsible for the deacetylation of lysine residues on the N-terminal part of the core histones (H2A, H2B, H3 and H4). Histone deacetylation gives a tag for epigenetic repression and plays an important role in transcriptional regulation, cell cycle progression and developmental events. Histone deacetylases act via the formation of large multiprotein complexes. This chain is Histone deacetylase 9 (HDA9), found in Arabidopsis thaliana (Mouse-ear cress).